The following is a 462-amino-acid chain: Fumarate hydratase class II (462 aa).

Residues 98 to 100 (SGT), R126, 129 to 132 (HPND), 139 to 141 (SSN), and T187 contribute to the substrate site. Residues 120 to 141 (GTRGKGRKVHPNDHVNKGQSSN) are disordered. H188 serves as the catalytic Proton donor/acceptor. S318 is an active-site residue. Substrate-binding positions include S319 and 324 to 326 (KVN).

It belongs to the class-II fumarase/aspartase family. Fumarase subfamily. In terms of assembly, homotetramer.

The protein localises to the cytoplasm. It carries out the reaction (S)-malate = fumarate + H2O. It participates in carbohydrate metabolism; tricarboxylic acid cycle; (S)-malate from fumarate: step 1/1. Its function is as follows. Involved in the TCA cycle. Catalyzes the stereospecific interconversion of fumarate to L-malate. The protein is Fumarate hydratase class II of Nitrosomonas europaea (strain ATCC 19718 / CIP 103999 / KCTC 2705 / NBRC 14298).